Consider the following 211-residue polypeptide: uncharacterized protein (211 aa).

2 disordered regions span residues 1 to 73 (MLRR…SKLK) and 96 to 123 (TNAA…ASLS). Polar residues-rich tracts occupy residues 26–35 (SKSSLISLTS) and 53–62 (APSQFLSPTN). Residues 63–73 (KRSTSSQSKLK) are compositionally biased toward low complexity. The residue at position 182 (Ser182) is a Phosphoserine. Thr184 bears the Phosphothreonine mark. At Ser186 the chain carries Phosphoserine.

This is an uncharacterized protein from Saccharomyces cerevisiae (strain ATCC 204508 / S288c) (Baker's yeast).